The sequence spans 222 residues: Ribosomal RNA small subunit methyltransferase G (222 aa).

S-adenosyl-L-methionine-binding positions include G80, L85, 131-132 (VE), and R148.

The protein belongs to the methyltransferase superfamily. RNA methyltransferase RsmG family.

The protein resides in the cytoplasm. The enzyme catalyses guanosine(527) in 16S rRNA + S-adenosyl-L-methionine = N(7)-methylguanosine(527) in 16S rRNA + S-adenosyl-L-homocysteine. Functionally, specifically methylates the N7 position of guanine in position 527 of 16S rRNA. This chain is Ribosomal RNA small subunit methyltransferase G, found in Polynucleobacter asymbioticus (strain DSM 18221 / CIP 109841 / QLW-P1DMWA-1) (Polynucleobacter necessarius subsp. asymbioticus).